Consider the following 1487-residue polypeptide: Chromosome partition protein MukB (1487 aa).

34–41 (GGNGAGKS) is an ATP binding site. Coiled coils occupy residues 297 to 458 (GSRE…TNAL), 506 to 601 (RESQ…LEAI), 637 to 666 (LEQEKELSLAKDKLAERRSQLESEIERLAS), 781 to 806 (RAAREQRLELLRNEREEVVEKHAKAA), 836 to 1109 (EQAL…ELRT), and 1210 to 1266 (VEAI…LSNI). The segment at 667 to 784 (PGGSNDPRLK…EIPLFGRAAR (118 aa)) is flexible hinge.

This sequence belongs to the SMC family. MukB subfamily. As to quaternary structure, homodimerization via its hinge domain. Binds to DNA via its C-terminal region. Interacts, and probably forms a ternary complex, with MukE and MukF via its C-terminal region. The complex formation is stimulated by calcium or magnesium. Interacts with tubulin-related protein FtsZ.

Its subcellular location is the cytoplasm. The protein localises to the nucleoid. Plays a central role in chromosome condensation, segregation and cell cycle progression. Functions as a homodimer, which is essential for chromosome partition. Involved in negative DNA supercoiling in vivo, and by this means organize and compact chromosomes. May achieve or facilitate chromosome segregation by condensation DNA from both sides of a centrally located replisome during cell division. This Vibrio parahaemolyticus serotype O3:K6 (strain RIMD 2210633) protein is Chromosome partition protein MukB.